The chain runs to 339 residues: Ketol-acid reductoisomerase (NADP(+)) (339 aa).

The KARI N-terminal Rossmann domain maps to 1-182 (MRVYYDRDAD…GGGRSGIIET (182 aa)). NADP(+) contacts are provided by residues 24–27 (YGSQ), R48, S51, T53, and 83–86 (DELQ). H108 is a catalytic residue. G134 lines the NADP(+) pocket. The KARI C-terminal knotted domain maps to 183–328 (SFREECETDL…EKLRAMMPWI (146 aa)). Mg(2+)-binding residues include D191, E195, E227, and E231. S252 provides a ligand contact to substrate.

This sequence belongs to the ketol-acid reductoisomerase family. Mg(2+) is required as a cofactor.

The catalysed reaction is (2R)-2,3-dihydroxy-3-methylbutanoate + NADP(+) = (2S)-2-acetolactate + NADPH + H(+). It catalyses the reaction (2R,3R)-2,3-dihydroxy-3-methylpentanoate + NADP(+) = (S)-2-ethyl-2-hydroxy-3-oxobutanoate + NADPH + H(+). The protein operates within amino-acid biosynthesis; L-isoleucine biosynthesis; L-isoleucine from 2-oxobutanoate: step 2/4. Its pathway is amino-acid biosynthesis; L-valine biosynthesis; L-valine from pyruvate: step 2/4. Its function is as follows. Involved in the biosynthesis of branched-chain amino acids (BCAA). Catalyzes an alkyl-migration followed by a ketol-acid reduction of (S)-2-acetolactate (S2AL) to yield (R)-2,3-dihydroxy-isovalerate. In the isomerase reaction, S2AL is rearranged via a Mg-dependent methyl migration to produce 3-hydroxy-3-methyl-2-ketobutyrate (HMKB). In the reductase reaction, this 2-ketoacid undergoes a metal-dependent reduction by NADPH to yield (R)-2,3-dihydroxy-isovalerate. The polypeptide is Ketol-acid reductoisomerase (NADP(+)) (Paramagnetospirillum magneticum (strain ATCC 700264 / AMB-1) (Magnetospirillum magneticum)).